A 581-amino-acid chain; its full sequence is Threonine--tRNA ligase (581 aa).

Residues 185 to 478 are catalytic; sequence DHRKLGKELD…LIEHYGGAFP (294 aa). Zn(2+)-binding residues include Cys-278, His-329, and His-455.

This sequence belongs to the class-II aminoacyl-tRNA synthetase family. As to quaternary structure, homodimer. Zn(2+) is required as a cofactor.

It localises to the cytoplasm. The catalysed reaction is tRNA(Thr) + L-threonine + ATP = L-threonyl-tRNA(Thr) + AMP + diphosphate + H(+). Catalyzes the attachment of threonine to tRNA(Thr) in a two-step reaction: L-threonine is first activated by ATP to form Thr-AMP and then transferred to the acceptor end of tRNA(Thr). Also edits incorrectly charged L-seryl-tRNA(Thr). The sequence is that of Threonine--tRNA ligase from Borreliella afzelii (strain PKo) (Borrelia afzelii).